We begin with the raw amino-acid sequence, 271 residues long: Non-homologous end joining protein Ku (271 aa).

Residues 12-194 form the Ku domain; that stretch reads KLSLVTCPVV…DQKPVPELLS (183 aa). The tract at residues 225–249 is disordered; it reads EAKKTPPAKKTKAEEKTGKGSAESN.

The protein belongs to the prokaryotic Ku family. In terms of assembly, homodimer. Interacts with LigD.

In terms of biological role, with LigD forms a non-homologous end joining (NHEJ) DNA repair enzyme, which repairs dsDNA breaks with reduced fidelity. Binds linear dsDNA with 5'- and 3'- overhangs but not closed circular dsDNA nor ssDNA. Recruits and stimulates the ligase activity of LigD. The polypeptide is Non-homologous end joining protein Ku (Methylocella silvestris (strain DSM 15510 / CIP 108128 / LMG 27833 / NCIMB 13906 / BL2)).